A 37-amino-acid polypeptide reads, in one-letter code: Fructose-bisphosphate aldolase A (37 aa).

It belongs to the class I fructose-bisphosphate aldolase family. Tetramer.

It carries out the reaction beta-D-fructose 1,6-bisphosphate = D-glyceraldehyde 3-phosphate + dihydroxyacetone phosphate. It functions in the pathway carbohydrate degradation; glycolysis; D-glyceraldehyde 3-phosphate and glycerone phosphate from D-glucose: step 4/4. Plays a key role in glycolysis and gluconeogenesis. This is Fructose-bisphosphate aldolase A from Thunnus albacares (Yellowfin tuna).